A 646-amino-acid polypeptide reads, in one-letter code: WW domain-containing adapter protein with coiled-coil (646 aa).

The segment at 1–138 (MVMYARKQQR…YDSADDWSEH (138 aa)) is disordered. The segment covering 23 to 37 (QPFQALKYSSKSHPS) has biased composition (polar residues). Residues 38-50 (SGDHRHEKMRDAA) are compositionally biased toward basic and acidic residues. Ser53 carries the phosphoserine modification. A compositionally biased stretch (polar residues) spans 61–75 (RSNSPENKYSDSTGH). The span at 103–122 (NHSALHSSNSHSSNPSNNPS) shows a compositional bias: low complexity. The 34-residue stretch at 129 to 162 (YDSADDWSEHISSSGKKYYYNCRTEVSQWEKPKE) folds into the WW domain. Residues Ser131 and Ser142 each carry the phosphoserine modification. Basic and acidic residues-rich tracts occupy residues 158 to 174 (EKPK…KEAN) and 182 to 191 (PKDRDYRREV). Disordered stretches follow at residues 158-352 (EKPK…PQST) and 428-541 (TQAQ…TATV). The span at 211-225 (DASSLLPQNILSQTS) shows a compositional bias: polar residues. A Phosphoserine modification is found at Ser225. Basic and acidic residues predominate over residues 226 to 239 (RHNDKDYRLPRAET). A compositionally biased stretch (low complexity) spans 252–267 (PVVHPTATPSTVPSSP). Positions 284-300 (GASTLSKLPTPTASLPA) are enriched in polar residues. Phosphothreonine is present on Thr293. Lys302 is modified (N6-acetyllysine). Over residues 316–331 (SHSCTTPSTSSASGLN) the composition is skewed to polar residues. The segment covering 332–351 (PTSAPPTSASAVPVSPVPQS) has biased composition (low complexity). The segment covering 428–463 (TQAQPSNQSPMSLTSDASSPRSYVSPRISTPQTNTV) has biased composition (polar residues). Ser446 bears the Phosphoserine mark. Thr471 is subject to Phosphothreonine. A compositionally biased stretch (polar residues) spans 490–503 (VSHSATQQPVTADK). Phosphoserine is present on residues Ser511, Ser523, and Ser525. Residues 511-524 (SPRSLQRLSSQRSP) show a composition bias toward low complexity. The segment covering 528–541 (PNHTCSSNASTATV) has biased composition (polar residues). Residues 617-643 (QATLREQRILFLRQQIKELEKLKNQNS) adopt a coiled-coil conformation.

As to quaternary structure, interacts (via coiled coil domain) with RNF20, RNF40 and UBE2A. Interacts (via WW domain) with RNA polymerase II. Interacts with MTOR and other components of the MTOR pathway including RPTOR, RUVBL1, RUVBL2, TTI1 and TTI2. In terms of processing, phosphorylated on tyrosine residues.

The protein resides in the nucleus speckle. Its subcellular location is the nucleus. In terms of biological role, acts as a linker between gene transcription and histone H2B monoubiquitination at 'Lys-120' (H2BK120ub1). Interacts with the RNA polymerase II transcriptional machinery via its WW domain and with RNF20-RNF40 via its coiled coil region, thereby linking and regulating H2BK120ub1 and gene transcription. Regulates the cell-cycle checkpoint activation in response to DNA damage. Positive regulator of amino acid starvation-induced autophagy. Also acts as a negative regulator of basal autophagy. Positively regulates MTOR activity by promoting, in an energy-dependent manner, the assembly of the TTT complex composed of TELO2, TTI1 and TTI2 and the RUVBL complex composed of RUVBL1 and RUVBL2 into the TTT-RUVBL complex. This leads to the dimerization of the mTORC1 complex and its subsequent activation. May negatively regulate the ubiquitin proteasome pathway. The chain is WW domain-containing adapter protein with coiled-coil (Wac) from Mus musculus (Mouse).